Here is a 185-residue protein sequence, read N- to C-terminus: Probable calcium-binding protein CML10 (185 aa).

Residues 1-41 (MVKIKMPALFRRRSGSKSPPLPQADPASGGGSPAPTPEEEM) are disordered. 4 consecutive EF-hand domains span residues 36–71 (TPEE…LGHA), 72–107 (ATDD…ASGD), 110–145 (AVEE…LGEK), and 146–181 (ATVQ…GGSF). 18 residues coordinate Ca(2+): Asp-49, Asn-51, Asp-53, Arg-55, Glu-60, Asp-85, Asp-87, Asp-89, Glu-96, Asp-123, Asp-125, Asn-127, Thr-129, Glu-134, Asp-159, Asn-161, Asp-163, and Glu-170.

Potential calcium sensor. This Oryza sativa subsp. japonica (Rice) protein is Probable calcium-binding protein CML10 (CML10).